The following is a 594-amino-acid chain: ATP-dependent RNA helicase DDX55 (594 aa).

Residues 9 to 37 (WDSLPQKLNGSIRRTLEELKFTHMTPVQS) carry the Q motif motif. The 184-residue stretch at 40 to 223 (IPLFMNNKDI…RAGLRNPVRI (184 aa)) folds into the Helicase ATP-binding domain. Residue 53–60 (AITGSGKT) coordinates ATP. Positions 171 to 174 (DEAD) match the DEAD box motif. One can recognise a Helicase C-terminal domain in the interval 254-411 (KFNKLIAFLQ…DLLPKLKAMA (158 aa)). The stretch at 486–542 (YKDKNREKQRQKMLKERKEKLETEGRKHFAKNKAWSKQKARKEKKQKVALKRKKEEG) forms a coiled coil. Residues 502–512 (RKEKLETEGRK) are compositionally biased toward basic and acidic residues. The disordered stretch occupies residues 502–548 (RKEKLETEGRKHFAKNKAWSKQKARKEKKQKVALKRKKEEGSDIDEG). Residues 513–537 (HFAKNKAWSKQKARKEKKQKVALKR) show a composition bias toward basic residues. Positions 532 to 561 (KVALKRKKEEGSDIDEGDVDELLQDTRLLK) are important for nuclear localization.

The protein belongs to the DEAD box helicase family. DDX55/SPB4 subfamily. Interacts with 28S rRNA. Interacts with double-stranded RNA substrates in vitro; the interaction stimulates ATPase activity.

It localises to the nucleus. The protein resides in the nucleoplasm. It carries out the reaction ATP + H2O = ADP + phosphate + H(+). In terms of biological role, probable ATP-binding RNA helicase. Has ATPase activity and is involved in the maturation of precursor large subunit rRNAs. This is ATP-dependent RNA helicase DDX55 (ddx55) from Xenopus laevis (African clawed frog).